Here is a 162-residue protein sequence, read N- to C-terminus: Endoribonuclease YbeY (162 aa).

Zn(2+) is bound by residues His118, His122, and His128.

This sequence belongs to the endoribonuclease YbeY family. Zn(2+) serves as cofactor.

The protein localises to the cytoplasm. In terms of biological role, single strand-specific metallo-endoribonuclease involved in late-stage 70S ribosome quality control and in maturation of the 3' terminus of the 16S rRNA. The sequence is that of Endoribonuclease YbeY from Glaesserella parasuis serovar 5 (strain SH0165) (Haemophilus parasuis).